A 531-amino-acid chain; its full sequence is MRDRTQCVAVPTQAFNEILDQDGQLTAYAQRLEQLRERGSHRVALLRGELARIRQDQVLGMPEKRVQVAAHRLKISEAQAVARQCKTEETQLVRKAVARVRGLFRDFDCSVRDAMREQRLLLKQVATVQHTSASSDQREHCLAQLRQCKEARHHAYRSLVEKSAALRNGKMTFIERVVRALREYSFNFDATQFFLANGLYIAIAVFFIACIVVAPFSGNGNLLTIPNILTILEQSSVRMFYAVGVAGIILLAGTDLSIGRMVAMGSVVTGIILHPGQNIVTFFGLGPWDFTPVPMAVRVVMSLAVSVALCVSFSLFAGFFSARLKIHPFISTLATQLIIYGVLFFGTSGTPVGSIDPYIKDLFGGRWILGTMQGTLVTFPKLIIPATIAVAIAWFIWNKTILGKNMYAVGGNAEAANVSGISVFGVTMSVFAMAAVFYGFGAFFETFKANASAGTGQGYELDAIASCVVGGISFNGGIGKLEGAVVGVIIFTGLTYCLTFLGIDTNLQFVFKGLIIIAAVALDSVKYLKRR.

Transmembrane regions (helical) follow at residues 193–213 (FFLA…CIVV), 239–259 (MFYA…LSIG), 267–287 (VVTG…GLGP), 300–320 (VMSL…AGFF), 326–346 (IHPF…LFFG), 376–396 (LVTF…AWFI), 424–444 (FGVT…GAFF), 461–481 (LDAI…IGKL), 483–503 (GAVV…FLGI), and 505–525 (TNLQ…LDSV).

The protein belongs to the binding-protein-dependent transport system permease family. AraH/RbsC subfamily. As to quaternary structure, the complex is composed of one ATP-binding protein (MglA), two transmembrane proteins (MglC) and a solute-binding protein (MglB).

The protein localises to the cell membrane. Part of the ABC transporter complex MglABC involved in galactose/methyl galactoside import. Probably responsible for the translocation of the substrate across the membrane. The chain is Galactose/methyl galactoside import permease protein MglC (mglC) from Treponema pallidum (strain Nichols).